A 253-amino-acid polypeptide reads, in one-letter code: HTH-type transcriptional regulator AdiY (253 aa).

In terms of domain architecture, HTH araC/xylS-type spans 149 to 246 (DSVYQIIESD…GMTPLHYVSQ (98 aa)). 2 DNA-binding regions (H-T-H motif) span residues 166–187 (SMVA…KSEN) and 213–236 (ISQV…KDFY).

In Escherichia coli (strain K12), this protein is HTH-type transcriptional regulator AdiY (adiY).